A 408-amino-acid polypeptide reads, in one-letter code: Probable 2,3-bisphosphoglycerate-independent phosphoglycerate mutase (408 aa).

It belongs to the BPG-independent phosphoglycerate mutase family. A-PGAM subfamily.

It catalyses the reaction (2R)-2-phosphoglycerate = (2R)-3-phosphoglycerate. It participates in carbohydrate degradation; glycolysis; pyruvate from D-glyceraldehyde 3-phosphate: step 3/5. Functionally, catalyzes the interconversion of 2-phosphoglycerate and 3-phosphoglycerate. This chain is Probable 2,3-bisphosphoglycerate-independent phosphoglycerate mutase, found in Deinococcus geothermalis (strain DSM 11300 / CIP 105573 / AG-3a).